We begin with the raw amino-acid sequence, 3748 residues long: MVLESVVADLLNRFLGDYVENLNKSQLKLGIWGGNVALDNLQIKENALSELDVPFKVKAGQIDKLTLKIPWKNLYGEAVVATLEGLYLLVVPGASIKYDAEKEEKSLQDIKQKELCRIEEALQKAAEKGAHSGEFMYGLENLLYKDVKPGRKRKKHKKHFKKRFKGLDRSKDKPKEAKKDTFLEKLATQVIKNVQVKITDIHIKYEDDITDPERPLSFGVTLREFSLLTTNEHWTPCILNEAEKIIYKLVKLDSLSAYWNVGCCMSYRGSREHILEQLKREILTSTNIPPDHQYIFQPISASAKLYMNPGAESELKTPKLDGNVEVQNIAIELTKPQYLSMIDFLESLDYMVRNAPYRKYKPCLPLHTNCRQWWKYAIDSVLEVHIRRYTQPWSWSNIKNHRQLLKSYKMAYKTKLTQAKVSEEIQKQIQDLEKSLDVFNIILVRQQAQVEVIHSGQKLRKKSAEAGEKRGWFSGFWGKKESKKRDEESSVPETIDDLMTPEEKDKLFTAIGYSENAYNLALPKQYVAHILTLKLVSTSIIIRENRNVPEILRVQIIGLGTQVSQRPGAQALKIEAKLEHWYVTGLRQQDIVPSLVASIGDTTSSLLKIEFETNPENSPADQTLIVQSQPVEVIYDAKTINAVVEFFQSNKGLDLEQITSATLMKLEEIKERTATGLTHIIETRKVLDLRINLKPSYLIIPQTGFHHEKSNLLILDFGTFQLNSKDQGAQKTANASLEEIIDKAYDKFDVEIRSVQLLFAKAEENWKKCRFQHPSTMHILQPMDIHVELAKAMVEKDVRMAKFKVSGGLPLMHVRISDQKIKDALCLINSIPLPQKSSTPSPERQVASIPVLSGGTKALLGTSLLLDGVESESDEEFFDAEDGDSQAARTVKASELKKAAEVPNEELVSLLLKFEIKEVVLELTKQQKEEETILVFNVTQLGTEATMRTFDLTAVSYLRKISLDYHDIKGSRKKPIHLISSSDRPGLDLLKVEYIKVDRNGPSFQTTFEKTEQTVKVAFSSLNLLLQTQALLSSLNYLTTVIPSDSQNTGVAKEVQAMPEKQKNSPLQKVMVPSRDSDVIGFRLFAKLNAFCVTVCDEKSNIAEIKIQGLDSSLSLQSKKQSLFARLENIIVTDVDPKTIHKKAVSIVGNEVFRFNLDLYPDATEGDSYTDMSTVDGVVALHVGCIQIVYLHKFLMSLLSFLNNFQVAKEALSAATAQAAEKAATSVKDLAQRSFRVSVDIDLKAPVIVIPQSSLSTNAVVVDLGLIRVHNRFSLVSGEDTANPPVIDKMEVQLTKLKLSRTAIQPGTSHPDIQLLHPINLEFFVSRNLAANWYHKVPVVEIKGRLDSMNVSLNQEDLNLLFRILAENLGEATEDLDKGKPRIQERGETKACREVSTPQDVHTTQGVPAARVEETRPVDIINVLLNFEIKEVVVTLMKKAERKGSPFHELKILHLGMEAKVKAHDMTAAAYLRNISMRCFHFPDSKGEPLRIVNTSDVSDGILLKLLFIKADSDGPDFKTIHDNTKQKLKVSFSSLDLVLHLEALLSLMDFLSSAIPSSDSSSSEKEPELKPLVGESRSLAIRAVPSSYEGDAFDLKITAELNAFNIFICDQKSNIAEIKIHGMDASISVKPKQTDVFARLKNIIVMNVDSLSIHKKAVSILGDEVFRFQMSLYPDATEGENYGDMSKVDGRLSLKVGCIQIVYVHKFFMSLLSFLNNFQAAKEALSTATVQAAERAASSVKDLAQKSFRLLMDIDLKAPVITIPQSSVSPNVVIADLGLIRVENKFSLVSVEQLALPPVADEMSIQLTQLKLARTVLQADSPQHDVEILKPVNMLLCIQRNLSAAWYTQIPGMEIKGELKPMQVALSQDDLTVLMKILLENLGEASSQPSPTQYAQEAARVKRDTRSGPDYLKEQELADPKPPGDQTVTLQFDFHFDSLSIILYNSDSSQEPRLSFHNDSFRLGELTLHLMASAGKMFKDGSMNVSLKLKTCTLDDLREGIERATSRMIDKKNDQDNNSSMIDISYSQDKNGSQVDAVLDKLYVCASVEFLMTVADFFIKAMPQSPENIAKEIQIPSRQTAAGRVKMEKDDSVRPNMTLKAMITDPEVVFVASLTKADAPALTASFQCNLSLSTSKLEQMMEASVRDLKVLACPFLRERRGKSITTVLQPCSLFMEKCTWASGKQNINIVVKEFVIKISPIILNTVMTIMAAMSPKTKEDEWKDTPKETDNLWAVKSITDYNSWFLGVDMATEVTENFRDSEHPSIEENCVVAVESVQVTLECGLGHRTVPLLLAESKFSGNIKNWTSLMAAAADMTLEVHYYNETHAVWEPLIERVEGNKPWSLKLNVKKNPIQDKSLMPGDDFIPEPQTAVHISSGATMNITISKSCLNVFSNLAKGFSEGAASTFDYSLKDRAPFTVKNALGVPMKVQPNRNLKVMGSPEKSDIYDVGAGQHLELDYASLEPSRQGKLSILSRQESSLFTLTFVPYGYTEVASVPVARPGRRLYNVRNPSASHSDSVLVQIDATEGNKVVTLRSPLQIKNHFSIAFIIYKFVKNVKLLERIGIARPEEEFHVPLDSYRCQLYVQPAGGLEQQYTHSSTYISWKEELHRSREVRCMLQCPAVEVSFLPLIVNTVALPDELSYIGAHGEDWDPAYVIHLYPPLTLRNLLPYSLRYLLEGTAETHELAEGSSADVLHSRISGEIIELVLVKYLGKNWNGHFRICDTLPEFFLVCFSSDTAEVMTVDLSVHVRRIGCRMELSVFSPYWLINKTSRVLQYRSEEIHVKHPADFRDIILFSFKKKNIFSKNKVQLKISTSAWSNGFSLDTVGSYGCVKCPATNMEYLVGVSIKMSSFNLSRVVTLTPFCTVANKSSLDLEVGEIASDGSIPTNKWHYVASSECIPFWPENLSGKLCVRVVGYEGSSKPFFYNRQDNGTLLSLEDLNGGILVDINTAEHSTVITFSDYHEGSAPALIMNHTQWDVLTYKQSGSQEELVLLPGETRLFAWADPTGIRKLTWNYAANFGEHDLLKDECGQFPYDANIQIHWVSFLDGRQRVLLFTDDVALVSKALQAEEMEQADHEVALSLHSLGLSLVNNENKQEVSYVGITSSGVVWEMKPKQKWKPFSQKQIMSLEQAYSKRLASQDRGWVKLDSNFEVNFDKVPMEMRLPIRCPIKRDFLSGIQVEFKQSPHQRSLRARLYWLQVDNQLPGTMFPVVFHPVAPPKSIALDSEPKPFIDVSVITRFNEYSKVLQFKYFMVLIQEMALKVDQGFLGAVISLFTPTTDPEAERKRTKLIQQDIDALNTELMESSMTDMSILSFFEHFHISPVKLHLSLSLGSGGEESDKEKQEMIAIHSVNLLLKSIGATLTDVDDLIFKLAYYEIRYQFYKRDQLMWSVVRHYSEQFLKQMYVLVLGLDVLGNPFGLIRGLSEGVEALFYEPFQGAVQGPEEFAEGLVIGVRSLVGHTVGGAAGVVSRITGSVGKGLAAITMDKEYQQKRREEMGRQPKDFGDSLARGGKGFLRGVVGGVTGIITKPVEGAKKEGAAGFFKGIGKGLVGAVARPTGGIIDMASSTFQGIQRVAESTEEVSSLRPPRLIHEDGIIRPYDRQESEGSDLLENHIKKLEGEAYQFHCAVPGNKRAVLMITNRRALFIKEVEILGHMSVDWQCLFEDFVCPPEVSENLLKISVKEQGLFHKKDSANIGHLRKIYLKDPITAKRAFDAIESAQSARQQQKLMRQSSVKLLRPQGPS.

One can recognise a Chorein N-terminal domain in the interval 3-115; the sequence is LESVVADLLN…SLQDIKQKEL (113 aa). A Phosphoserine modification is found at Ser132. At Thr613 the chain carries Phosphothreonine. Ser618 is modified (phosphoserine). At Thr623 the chain carries Phosphothreonine. A phosphoserine mark is found at Ser736, Ser841, Ser871, and Ser873. Residues 876–882 carry the FFAT motif; the sequence is EFFDAED. Phosphothreonine is present on Thr1968. Phosphoserine occurs at positions 1974 and 2442. The interval 2410–3304 is required for late endosome/lysosome localization; the sequence is DYSLKDRAPF…IQQDIDALNT (895 aa). The SHR-BD domain maps to 2760–3012; the sequence is ELSVFSPYWL…LFAWADPTGI (253 aa). Residues 3305 to 3748 are required for lipid droplet localization; that stretch reads ELMESSMTDM…VKLLRPQGPS (444 aa). 2 positions are modified to omega-N-methylarginine: Arg3514 and Arg3521. An N6-acetyllysine modification is found at Lys3533.

The protein belongs to the VPS13 family.

It localises to the mitochondrion outer membrane. It is found in the lipid droplet. Its subcellular location is the endoplasmic reticulum membrane. The protein localises to the lysosome membrane. The protein resides in the late endosome membrane. Mediates the transfer of lipids between membranes at organelle contact sites. Necessary for proper mitochondrial function and maintenance of mitochondrial transmembrane potential. Involved in the regulation of PINK1/PRKN-mediated mitophagy in response to mitochondrial depolarization. This Mus musculus (Mouse) protein is Intermembrane lipid transfer protein VPS13C.